Reading from the N-terminus, the 323-residue chain is uncharacterized protein (323 aa).

The helical transmembrane segment at 4-24 threads the bilayer; the sequence is IIFAFIILFVFLLPMIIFYQP.

Its subcellular location is the membrane. This is an uncharacterized protein from Escherichia coli (strain K12).